Here is a 344-residue protein sequence, read N- to C-terminus: Arginine N-succinyltransferase (344 aa).

Succinyl-CoA is bound at residue Leu-125. The Proton donor role is filled by His-229.

This sequence belongs to the arginine N-succinyltransferase family.

It catalyses the reaction succinyl-CoA + L-arginine = N(2)-succinyl-L-arginine + CoA + H(+). It functions in the pathway amino-acid degradation; L-arginine degradation via AST pathway; L-glutamate and succinate from L-arginine: step 1/5. Its function is as follows. Catalyzes the transfer of succinyl-CoA to arginine to produce N(2)-succinylarginine. This Salmonella dublin (strain CT_02021853) protein is Arginine N-succinyltransferase.